We begin with the raw amino-acid sequence, 460 residues long: 1-aminocyclopropane-1-carboxylate synthase 11 (460 aa).

Substrate is bound by residues Glu-45 and Tyr-83. The residue at position 267 (Lys-267) is an N6-(pyridoxal phosphate)lysine.

It belongs to the class-I pyridoxal-phosphate-dependent aminotransferase family. Homodimer and heterodimer. In vivo, the relevance of heterodimerization with other ACS enzymes is however unsure. Interacts with GRF3. Pyridoxal 5'-phosphate serves as cofactor. Post-translationally, may be processed at its C-terminus. In terms of tissue distribution, expressed in roots.

The catalysed reaction is S-adenosyl-L-methionine = 1-aminocyclopropane-1-carboxylate + S-methyl-5'-thioadenosine + H(+). It functions in the pathway alkene biosynthesis; ethylene biosynthesis via S-adenosyl-L-methionine; ethylene from S-adenosyl-L-methionine: step 1/2. Functionally, 1-aminocyclopropane-1-carboxylate synthase (ACS) enzymes catalyze the conversion of S-adenosyl-L-methionine (SAM) into 1-aminocyclopropane-1-carboxylate (ACC), a direct precursor of ethylene. This is 1-aminocyclopropane-1-carboxylate synthase 11 (ACS11) from Arabidopsis thaliana (Mouse-ear cress).